The chain runs to 300 residues: Sulfate adenylyltransferase subunit 2 (300 aa).

A disordered region spans residues 281–300 (RAIDRDEAGSMEKKKREGYF).

It belongs to the PAPS reductase family. CysD subfamily. In terms of assembly, heterodimer composed of CysD, the smaller subunit, and CysN.

It catalyses the reaction sulfate + ATP + H(+) = adenosine 5'-phosphosulfate + diphosphate. The protein operates within sulfur metabolism; hydrogen sulfide biosynthesis; sulfite from sulfate: step 1/3. In terms of biological role, with CysN forms the ATP sulfurylase (ATPS) that catalyzes the adenylation of sulfate producing adenosine 5'-phosphosulfate (APS) and diphosphate, the first enzymatic step in sulfur assimilation pathway. APS synthesis involves the formation of a high-energy phosphoric-sulfuric acid anhydride bond driven by GTP hydrolysis by CysN coupled to ATP hydrolysis by CysD. This chain is Sulfate adenylyltransferase subunit 2, found in Brucella canis (strain ATCC 23365 / NCTC 10854 / RM-666).